Reading from the N-terminus, the 432-residue chain is Adenylosuccinate synthetase (432 aa).

GTP is bound by residues 12–18 (GDEGKGK) and 40–42 (GHT). Asp-13 (proton acceptor) is an active-site residue. The Mg(2+) site is built by Asp-13 and Gly-40. IMP contacts are provided by residues 13 to 16 (DEGK), 38 to 41 (NAGH), Thr-129, Arg-143, Gln-224, Thr-239, and Arg-303. The active-site Proton donor is His-41. 299–305 (VTTGRRR) is a binding site for substrate. Residues Arg-305, 331–333 (KLD), and 413–415 (GVG) each bind GTP.

This sequence belongs to the adenylosuccinate synthetase family. Homodimer. Mg(2+) is required as a cofactor.

The protein resides in the cytoplasm. The catalysed reaction is IMP + L-aspartate + GTP = N(6)-(1,2-dicarboxyethyl)-AMP + GDP + phosphate + 2 H(+). It functions in the pathway purine metabolism; AMP biosynthesis via de novo pathway; AMP from IMP: step 1/2. Its function is as follows. Plays an important role in the de novo pathway of purine nucleotide biosynthesis. Catalyzes the first committed step in the biosynthesis of AMP from IMP. The chain is Adenylosuccinate synthetase from Mycobacterium leprae (strain TN).